We begin with the raw amino-acid sequence, 321 residues long: L-carnitine dehydrogenase (321 aa).

14-19 (GSGVIG) is an NAD(+) binding site. Positions 317–321 (MTFSE) are important for catalytic activity.

Belongs to the 3-hydroxyacyl-CoA dehydrogenase family. L-carnitine dehydrogenase subfamily. Homodimer.

Its subcellular location is the cytoplasm. The enzyme catalyses carnitine + NAD(+) = 3-dehydrocarnitine + NADH + H(+). Its pathway is amine and polyamine metabolism; carnitine metabolism. The enzyme activity is strongly inhibited by Ag(+), Ni(+), Hg(+), and p-chloromercuribenzoate, and partially inhibited by Li(+), Ca(2+), Mn(2+), Co(2+), Cu(2+), and Zn(2+). Functionally, catalyzes the NAD(+)-dependent oxidation of L-carnitine to 3-dehydrocarnitine. Is specific for L-carnitine and NAD(+) as substrates since D-carnitine, other carnitine analogs such as choline and betaine, and NADP(+) are not substrates. Despite a high similarity to 3-hydroxyacyl-CoA dehydrogenases, cannot dehydrogenate 3-hydroxybutylate and 3-hydroxybutyl-CoA. Is probably involved in a L-carnitine degradation pathway that allows Pseudomonas sp. strain NBRC 13558 to grow on L-carnitine as the sole source of carbon and nitrogen. This chain is L-carnitine dehydrogenase, found in Pseudomonas sp.